Consider the following 359-residue polypeptide: Phosphate acyltransferase (359 aa).

A disordered region spans residues 338–359 (LEGAAGRAARPPPPRRASSHDA).

Belongs to the PlsX family. Homodimer. Probably interacts with PlsY.

It localises to the cytoplasm. It catalyses the reaction a fatty acyl-[ACP] + phosphate = an acyl phosphate + holo-[ACP]. Its pathway is lipid metabolism; phospholipid metabolism. Functionally, catalyzes the reversible formation of acyl-phosphate (acyl-PO(4)) from acyl-[acyl-carrier-protein] (acyl-ACP). This enzyme utilizes acyl-ACP as fatty acyl donor, but not acyl-CoA. This chain is Phosphate acyltransferase, found in Anaeromyxobacter sp. (strain Fw109-5).